The following is a 528-amino-acid chain: Autophagy-related protein 22 (528 aa).

At 1-98 (MSYGTINDMN…IFVDTSSFAL (98 aa)) the chain is on the cytoplasmic side. The chain crosses the membrane as a helical span at residues 99–119 (YVFSLSVLFQTIIVISVSGIV). Residues 120–130 (DLWGSVKFKGR) are Vacuolar-facing. A helical membrane pass occupies residues 131-151 (ILVWFGIVGALSTVAISKLND). Topologically, residues 152 to 153 (TQ) are cytoplasmic. Residues 154–174 (IYSLAGLYIVANGCFGVINVV) form a helical membrane-spanning segment. Residues 175-210 (GNSLLPIFVKDSLKCQSQGAYEPDKVDSLTTVISGR) lie on the Vacuolar side of the membrane. The chain crosses the membrane as a helical span at residues 211 to 231 (GASLGYSSALIVQIVSMFLVA). Residues 232-241 (SKKGSKQDVQ) lie on the Cytoplasmic side of the membrane. The helical transmembrane segment at 242-262 (VAVLFVGIWWFVWQLPMIWLI) threads the bilayer. At 263–318 (DDVTIPIRVDDSTLASARSPYPGEQDALGQLNWKNYLSYGWVSLFESFKHARLLKD) the chain is on the vacuolar side. At serine 278 the chain carries Phosphoserine. The chain crosses the membrane as a helical span at residues 319–339 (VMIFLIAWFIISDSITTINST). The Cytoplasmic portion of the chain corresponds to 340-352 (AVLFSKAELHMST). Residues 353-373 (LNLIMISVLTVVNAMLGAFMI) form a helical membrane-spanning segment. Over 374–388 (PQFLATKFRWTSSQT) the chain is Vacuolar. A helical membrane pass occupies residues 389-409 (LMYIIIWASFIPFYGILGFFF). Residues 410 to 417 (NAFGLKHK) lie on the Cytoplasmic side of the membrane. A helical membrane pass occupies residues 418-438 (FEMFLLAIWYGLSLGGLSAVS). Over 439–485 (RSVFSLIVPPGKESTFFSMFSITDKGSSILGPFLVGLLTDKTHNIRY) the chain is Vacuolar. Residues 486-506 (SFYFFFLLLMLSLPVLNCLDV) form a helical membrane-spanning segment. At 507–528 (KRGRREAEELSQVLPESERRLD) the chain is on the cytoplasmic side.

The protein belongs to the ATG22 family.

The protein localises to the vacuole membrane. Vacuolar effluxer which mediate the efflux of leucine and other amino acids resulting from autophagic degradation. The release of autophagic amino acids allows the maintenance of protein synthesis and viability during nitrogen starvation. The chain is Autophagy-related protein 22 (ATG22) from Saccharomyces cerevisiae (strain ATCC 204508 / S288c) (Baker's yeast).